Here is a 382-residue protein sequence, read N- to C-terminus: Putative phospholipase A1 (382 aa).

The signal sequence occupies residues Met-1 to Ala-27. Residues Phe-28–Gln-65 are Periplasmic-facing. A beta stranded membrane pass occupies residues Glu-66–Arg-78. Over Ser-79–Arg-168 the chain is Extracellular. Residues Ala-169–Glu-183 traverse the membrane as a beta stranded segment. Topologically, residues Asp-184–Arg-189 are periplasmic. The beta stranded transmembrane segment at Ala-190–Trp-202 threads the bilayer. The Extracellular portion of the chain corresponds to Gln-203–Pro-213. Ser-211 serves as a coordination point for Ca(2+). The beta stranded transmembrane segment at Phe-214–Leu-233 threads the bilayer. Over Pro-234 to Gly-236 the chain is Periplasmic. Residues Gly-237 to Ser-250 form a beta stranded membrane-spanning segment. The active-site Proton acceptor is the His-248. Catalysis depends on Ser-250, which acts as the Nucleophile. The Extracellular portion of the chain corresponds to Asn-251–Arg-259. Ser-258 contributes to the Ca(2+) binding site. A beta stranded membrane pass occupies residues Ser-260–Trp-272. Residues Gly-273–Lys-274 are Periplasmic-facing. A beta stranded membrane pass occupies residues Leu-275–Arg-284. The Extracellular portion of the chain corresponds to Ala-285–Asp-306. Ca(2+) is bound at residue Asp-294. The beta stranded transmembrane segment at Val-307–Leu-313 threads the bilayer. Over Asn-314 to Asp-315 the chain is Periplasmic. A beta stranded membrane pass occupies residues Arg-316 to Tyr-325. Residues Asn-326–Gly-332 lie on the Extracellular side of the membrane. Residues Ala-333–Pro-341 form a beta stranded membrane-spanning segment. Residues Ile-342–Leu-346 lie on the Periplasmic side of the membrane. The chain crosses the membrane as a beta stranded span at residues Lys-347–Tyr-356. The Extracellular portion of the chain corresponds to Gly-357–His-365. Residues Lys-366–Asn-377 form a beta stranded membrane-spanning segment. At Asp-378–Ile-382 the chain is on the periplasmic side.

The protein belongs to the phospholipase A1 family. In terms of assembly, homodimer; dimerization is reversible, and the dimeric form is the active one. Ca(2+) is required as a cofactor.

The protein localises to the cell outer membrane. It carries out the reaction a 1,2-diacyl-sn-glycero-3-phosphocholine + H2O = a 2-acyl-sn-glycero-3-phosphocholine + a fatty acid + H(+). The enzyme catalyses a 1,2-diacyl-sn-glycero-3-phosphocholine + H2O = a 1-acyl-sn-glycero-3-phosphocholine + a fatty acid + H(+). In terms of biological role, hydrolysis of phosphatidylcholine with phospholipase A2 (EC 3.1.1.4) and phospholipase A1 (EC 3.1.1.32) activities. The protein is Putative phospholipase A1 of Neisseria meningitidis serogroup B (strain ATCC BAA-335 / MC58).